A 90-amino-acid polypeptide reads, in one-letter code: Serine protease inhibitor Cvsi-1 (90 aa).

A signal peptide spans 1 to 19 (MDVVRTLILCVCLFGLTFA).

In terms of processing, contains 6 disulfide bonds. As to expression, detected in hemolymph (at protein level). In oysters collected in the summer the expression level is highest in the digestive gland with low levels of expression in gill, mantle, labial palp, style-sac midgut, gonad, heart, and hemocyte. In winter expression levels are higher in all tissues with highest expression levels observed in the digestive gland. Within the digestive gland expression is limited to the basophil cells of the digestive diverticula.

It is found in the secreted. Functionally, slow-binding inhibitor of serine proteases. The inhibitor rapidly binds to the protease forming a weak enzyme-inhibitor complex, and this is followed by a slow isomerization forming a tight-binding enzyme-inhibitor complex. Active against subtilisin A, perkinsin and trypsin with dissociation constants of 0.29 nM, 13.7 nM and 17.7 nM respectively. Not active against thermolysin, papain or pepsin. Has antiparasitic activity against the protozoan P.marinus. The protein is Serine protease inhibitor Cvsi-1 of Crassostrea virginica (Eastern oyster).